Reading from the N-terminus, the 346-residue chain is Phosphoribosylformylglycinamidine cyclo-ligase (346 aa).

Belongs to the AIR synthase family.

The protein localises to the cytoplasm. It catalyses the reaction 2-formamido-N(1)-(5-O-phospho-beta-D-ribosyl)acetamidine + ATP = 5-amino-1-(5-phospho-beta-D-ribosyl)imidazole + ADP + phosphate + H(+). It participates in purine metabolism; IMP biosynthesis via de novo pathway; 5-amino-1-(5-phospho-D-ribosyl)imidazole from N(2)-formyl-N(1)-(5-phospho-D-ribosyl)glycinamide: step 2/2. The protein is Phosphoribosylformylglycinamidine cyclo-ligase of Photobacterium profundum (strain SS9).